A 93-amino-acid polypeptide reads, in one-letter code: MAKTAAALHILVKEEKLALDLLEQIKNGADFGKLAKKHSICPSGKRGGDLGEFRQGQMVPAFDKVVFSCPVLEPTGPLHTQFGYHIIKVLYRN.

Residues 2-91 (AKTAAALHIL…FGYHIIKVLY (90 aa)) enclose the PpiC domain.

The protein belongs to the PpiC/parvulin rotamase family.

It localises to the cytoplasm. The catalysed reaction is [protein]-peptidylproline (omega=180) = [protein]-peptidylproline (omega=0). With respect to regulation, not inhibited by cyclosporin A or FK506. Functionally, PPIases accelerate the folding of proteins. It prefers amino acid residues with hydrophobic side chains like leucine and phenylalanine in the P1 position of the peptides substrates. The polypeptide is Peptidyl-prolyl cis-trans isomerase C (ppiC) (Escherichia coli (strain K12)).